Here is a 388-residue protein sequence, read N- to C-terminus: Protein RecA (388 aa).

Residue 79–86 (GPESSGKT) participates in ATP binding. Residues 347 to 372 (IDGEEVSEQDTENKKDEPKKEEAVNE) are disordered. Over residues 357–369 (TENKKDEPKKEEA) the composition is skewed to basic and acidic residues.

The protein belongs to the RecA family.

Its subcellular location is the cytoplasm. Functionally, can catalyze the hydrolysis of ATP in the presence of single-stranded DNA, the ATP-dependent uptake of single-stranded DNA by duplex DNA, and the ATP-dependent hybridization of homologous single-stranded DNAs. It interacts with LexA causing its activation and leading to its autocatalytic cleavage. The sequence is that of Protein RecA from Streptococcus pneumoniae (strain CGSP14).